The following is a 133-amino-acid chain: Protransforming growth factor alpha (133 aa).

A signal peptide spans 1 to 23; the sequence is MVPSAGQLALFALGIFLAVCQAL. Positions 24 to 38 are cleaved as a propeptide — removed in mature form; it reads ENSTSALSDPPVAAA. Residues 24 to 97 are Extracellular-facing; it reads ENSTSALSDP…AVVAASQKKQ (74 aa). Asn25 carries N-linked (GlcNAc...) asparagine glycosylation. The EGF-like domain maps to 42-82; the sequence is HFNDCPDSHTQFCFHGTCRFLLQEEKPACVCHSGYVGARCE. Cystine bridges form between Cys46-Cys59, Cys54-Cys70, and Cys72-Cys81. Residues 89–133 constitute a propeptide, removed in mature form; the sequence is VVAASQKKQAITALVVVTIVALAVLIITCVLIHCCEVRKHSVVVP. A helical membrane pass occupies residues 98-120; the sequence is AITALVVVTIVALAVLIITCVLI. Residues 121–133 are Cytoplasmic-facing; that stretch reads HCCEVRKHSVVVP.

Interacts with the PDZ domains of MAGI3, SDCBP and SNTA1. The interaction with SDCBP, is required for the targeting to the cell surface. In the endoplasmic reticulum, in its immature form (i.e. with a prosegment and lacking full N-glycosylation), interacts with CNIH. In the Golgi apparatus, may form a complex with CNIH and GORASP2. Interacts (via cytoplasmic C-terminal domain) with NKD2. Skin.

The protein resides in the secreted. It is found in the extracellular space. It localises to the cell membrane. Functionally, TGF alpha is a mitogenic polypeptide that is able to bind to the EGF receptor/EGFR and to act synergistically with TGF beta to promote anchorage-independent cell proliferation in soft agar. This is Protransforming growth factor alpha (TGFA) from Ovis aries (Sheep).